The following is a 473-amino-acid chain: Photosystem II CP43 reaction center protein (473 aa).

A propeptide spanning residues 1–14 is cleaved from the precursor; it reads MKTLYSLRRFYPVE. Thr-15 is subject to N-acetylthreonine. At Thr-15 the chain carries Phosphothreonine. 5 helical membrane-spanning segments follow: residues 69 to 93, 134 to 155, 178 to 200, 255 to 275, and 291 to 312; these read LFEV…PHLA, LLGP…KDRN, KALY…RKIT, KPFA…LSYS, and WFNN…ASQA. Glu-367 lines the [CaMn4O5] cluster pocket. Residues 447–471 form a helical membrane-spanning segment; sequence RARAAAAGFEKGIDRDFEPVLSMTP.

The protein belongs to the PsbB/PsbC family. PsbC subfamily. In terms of assembly, PSII is composed of 1 copy each of membrane proteins PsbA, PsbB, PsbC, PsbD, PsbE, PsbF, PsbH, PsbI, PsbJ, PsbK, PsbL, PsbM, PsbT, PsbX, PsbY, PsbZ, Psb30/Ycf12, at least 3 peripheral proteins of the oxygen-evolving complex and a large number of cofactors. It forms dimeric complexes. It depends on Binds multiple chlorophylls and provides some of the ligands for the Ca-4Mn-5O cluster of the oxygen-evolving complex. It may also provide a ligand for a Cl- that is required for oxygen evolution. PSII binds additional chlorophylls, carotenoids and specific lipids. as a cofactor.

The protein resides in the plastid. Its subcellular location is the chloroplast thylakoid membrane. In terms of biological role, one of the components of the core complex of photosystem II (PSII). It binds chlorophyll and helps catalyze the primary light-induced photochemical processes of PSII. PSII is a light-driven water:plastoquinone oxidoreductase, using light energy to abstract electrons from H(2)O, generating O(2) and a proton gradient subsequently used for ATP formation. The sequence is that of Photosystem II CP43 reaction center protein from Amborella trichopoda.